Here is a 333-residue protein sequence, read N- to C-terminus: Ferrochelatase (333 aa).

The Fe cation site is built by His-202 and Glu-284.

It belongs to the ferrochelatase family.

The protein localises to the cytoplasm. The enzyme catalyses heme b + 2 H(+) = protoporphyrin IX + Fe(2+). The protein operates within porphyrin-containing compound metabolism; protoheme biosynthesis; protoheme from protoporphyrin-IX: step 1/1. Functionally, catalyzes the ferrous insertion into protoporphyrin IX. This chain is Ferrochelatase, found in Francisella tularensis subsp. holarctica (strain LVS).